Reading from the N-terminus, the 399-residue chain is MIKKELPDEFGHFGPYGGMFVADTLVHALKQLEHAYTKYRNDQDFLSELHTELKDYVGRPNPLYHAVHLSKKIGGAQIYLKREDLNHTGAHKINNTIGQALLAKRMGKTRVIAETGAGQHGVATATVAAKFGFQCVVYMGSEDIKRQSSNVYRMKLLGAEVVPVTSGSKTLKDALNEALRDWVSHVDDTFYIIGTVAGPHPYPQMVRDFQAIIGVEARAQHMEKTGRLPDALVACVGGGSNAIGLFYPFLNDQSVMIYGVEAGGKGIETGEHSASLIAGKPGVLHGNRTYLLCDEYGQVKDTHSVSAGLDYPGVGPEHAYLKDTGRVIYKAINDSEALDAFRLLTHTEGIIPALESSHAVAYAIQLAKTMSKEQSIIVNLSGRGDKDMHTVAAIDGITI.

Lys-92 is modified (N6-(pyridoxal phosphate)lysine).

It belongs to the TrpB family. In terms of assembly, tetramer of two alpha and two beta chains. It depends on pyridoxal 5'-phosphate as a cofactor.

It catalyses the reaction (1S,2R)-1-C-(indol-3-yl)glycerol 3-phosphate + L-serine = D-glyceraldehyde 3-phosphate + L-tryptophan + H2O. It participates in amino-acid biosynthesis; L-tryptophan biosynthesis; L-tryptophan from chorismate: step 5/5. In terms of biological role, the beta subunit is responsible for the synthesis of L-tryptophan from indole and L-serine. In Legionella pneumophila (strain Paris), this protein is Tryptophan synthase beta chain.